The chain runs to 504 residues: Probable cytosol aminopeptidase (504 aa).

Mn(2+) is bound by residues lysine 263 and aspartate 268. Lysine 275 is a catalytic residue. Mn(2+) is bound by residues aspartate 286, aspartate 345, and glutamate 347. Arginine 349 is an active-site residue.

This sequence belongs to the peptidase M17 family. Mn(2+) is required as a cofactor.

The protein localises to the cytoplasm. It carries out the reaction Release of an N-terminal amino acid, Xaa-|-Yaa-, in which Xaa is preferably Leu, but may be other amino acids including Pro although not Arg or Lys, and Yaa may be Pro. Amino acid amides and methyl esters are also readily hydrolyzed, but rates on arylamides are exceedingly low.. The catalysed reaction is Release of an N-terminal amino acid, preferentially leucine, but not glutamic or aspartic acids.. Functionally, presumably involved in the processing and regular turnover of intracellular proteins. Catalyzes the removal of unsubstituted N-terminal amino acids from various peptides. This Sulfurihydrogenibium sp. (strain YO3AOP1) protein is Probable cytosol aminopeptidase.